The primary structure comprises 319 residues: Transcription factor VBP (319 aa).

2 stretches are compositionally biased toward low complexity: residues 1–31 (MPGR…GAVA) and 143–158 (ASAS…STAV). Disordered regions lie at residues 1 to 35 (MPGR…QQPE) and 139 to 186 (EKEP…DPDC). Over residues 159-180 (YQQSEAASSTESPPQNERNTPS) the composition is skewed to polar residues. One can recognise a bZIP domain in the interval 243-306 (DEKYWTRRKK…GRCKNIVSKY (64 aa)). A basic motif region spans residues 245 to 265 (KYWTRRKKNNVAAKRSRDARR). The interval 266–273 (LKENQITI) is leucine-zipper.

This sequence belongs to the bZIP family. PAR subfamily. As to quaternary structure, binds DNA as a homodimer or a heterodimer. Exists as a stable dimer in the absence of DNA. As to expression, isoform 1 and isoform 3 are expressed in a variety of somatic tissues, including liver, heart, intestine, stomach and kidney. Both isoforms are also expressed in hepatoma (LMH) cells and in embryonic fibroblast cell lines. Isoform 2 and isoform 4 are expressed in adult heart and intestine.

It localises to the nucleus. In terms of biological role, transcription factor that binds to and transactivates the vitellogenin II (VTG2) promoter. Binds to the palindromic sequence 5'-GTTTACATAAAC-3'. This chain is Transcription factor VBP (TEF), found in Gallus gallus (Chicken).